The primary structure comprises 473 residues: Probable serine/threonine-protein kinase glkA (473 aa).

The segment at 1–84 (MTIPTDNNSS…QSSSTATVNS (84 aa)) is disordered. The span at 7-84 (NNSSNNKGYN…QSSSTATVNS (78 aa)) shows a compositional bias: low complexity. Positions 91 to 366 (YEIIKQVGQG…IDEIIAHPFL (276 aa)) constitute a Protein kinase domain. ATP contacts are provided by residues 97 to 105 (VGQGTFGKV) and Lys119. Asp208 (proton acceptor) is an active-site residue. Disordered regions lie at residues 389 to 418 (GKSS…SNNK) and 437 to 473 (SSNL…TNTI). The span at 442–466 (SIDNSNNGKSSSSSNNIPSLNNSNN) shows a compositional bias: low complexity.

The protein belongs to the protein kinase superfamily. CMGC Ser/Thr protein kinase family. GSK-3 subfamily.

The enzyme catalyses L-seryl-[tau protein] + ATP = O-phospho-L-seryl-[tau protein] + ADP + H(+). The catalysed reaction is L-threonyl-[tau protein] + ATP = O-phospho-L-threonyl-[tau protein] + ADP + H(+). The protein is Probable serine/threonine-protein kinase glkA (glkA) of Dictyostelium discoideum (Social amoeba).